The following is a 339-amino-acid chain: DNA-directed RNA polymerase subunit alpha (339 aa).

The tract at residues 1–233 (MVREEVAGST…DLFLPFLHAE (233 aa)) is alpha N-terminal domain (alpha-NTD). The alpha C-terminal domain (alpha-CTD) stretch occupies residues 264–339 (KKGIPLNCIF…IDLLKNKLSF (76 aa)).

It belongs to the RNA polymerase alpha chain family. In terms of assembly, in plastids the minimal PEP RNA polymerase catalytic core is composed of four subunits: alpha, beta, beta', and beta''. When a (nuclear-encoded) sigma factor is associated with the core the holoenzyme is formed, which can initiate transcription.

Its subcellular location is the plastid. The protein resides in the chloroplast. The enzyme catalyses RNA(n) + a ribonucleoside 5'-triphosphate = RNA(n+1) + diphosphate. Its function is as follows. DNA-dependent RNA polymerase catalyzes the transcription of DNA into RNA using the four ribonucleoside triphosphates as substrates. This Bromus inermis (Smooth brome grass) protein is DNA-directed RNA polymerase subunit alpha.